A 292-amino-acid chain; its full sequence is Bifunctional protein FolD 1 (292 aa).

165 to 167 is a binding site for NADP(+); it reads GRS.

It belongs to the tetrahydrofolate dehydrogenase/cyclohydrolase family. Homodimer.

It catalyses the reaction (6R)-5,10-methylene-5,6,7,8-tetrahydrofolate + NADP(+) = (6R)-5,10-methenyltetrahydrofolate + NADPH. The enzyme catalyses (6R)-5,10-methenyltetrahydrofolate + H2O = (6R)-10-formyltetrahydrofolate + H(+). The protein operates within one-carbon metabolism; tetrahydrofolate interconversion. Catalyzes the oxidation of 5,10-methylenetetrahydrofolate to 5,10-methenyltetrahydrofolate and then the hydrolysis of 5,10-methenyltetrahydrofolate to 10-formyltetrahydrofolate. This is Bifunctional protein FolD 1 from Myxococcus xanthus (strain DK1622).